The following is a 427-amino-acid chain: Homeotic protein caudal (427 aa).

The interval 104-273 (QLMQQHHHHH…QPQPGKTRTK (170 aa)) is disordered. Residues 116–129 (ASSSSASSGSSSSG) show a composition bias toward low complexity. Residues 145–164 (GVGGAGGGGGVGGATDGGPG) are compositionally biased toward gly residues. Positions 183–195 (ITVSGSEISSPGA) are enriched in polar residues. Over residues 209-243 (HLSAVANNNNNNNNNNNSPSTHNNNNNNNSVSNNN) the composition is skewed to low complexity. Residue Thr-245 is modified to Phosphothreonine. Positions 252–257 (YFDWMK) match the Antp-type hexapeptide motif. Residues 273–332 (KDKYRVVYTDFQRLELEKEYCTSRYITIRRKSELAQTLSLSERQVKIWFQNRRAKERKQN) constitute a DNA-binding region (homeobox).

It belongs to the Caudal homeobox family. As to expression, maternally localized in an anteroposterior gradient in the syncytial blastoderm. Also expressed in the pole cells. Zygotically localized in the primordia of the terminal abdominal segment, the hindgut and in the posterior midgut rudiment. Expressed in the gut, the gonads and parts of the genital disks of third instar larvae (at protein level).

Its subcellular location is the nucleus. Caudal (cad) is one of a number of transcription factors controlling segmentation of the embryo. Further transcriptional regulation via a 5' flanking region containing DNA replication-related elements (DRE) and by dref also regulated by trh and tgo via the CNS midline element. Alongside Bicoid (bcd), caudal forms concentration gradients down the anterior-posterior (A-P) axis providing positional information and subsequent induction of the gap genes. Plays a role in gastrulation/germ band extension, hindgut morphogenesis, positive regulation of cell proliferation, genital disk development and pattern formation. Acts as a key regulator of the Hox gene network and activates transcription via the downstream core promoter element (DPE) relative to the TATA box. Plays a role in the establishment of the hindgut and in the invagination of the hindgut primordium during gastrulation. These effects on the gut are achieved by acting combinatorially at the posterior of the embryo to activate transcription of different targets including fog, fkh and wg. Caudal is involved in regulation of proliferation through transactivation of the E2F gene. Postembryonically its function is mostly restricted to the intestine where it regulates antimicrobial peptide (AMP) levels preserving the normal gut flora. The polypeptide is Homeotic protein caudal (cad) (Drosophila melanogaster (Fruit fly)).